Consider the following 177-residue polypeptide: Putative acetyltransferase FG08082 (177 aa).

One can recognise an N-acetyltransferase domain in the interval 81-174 (EEWEQVGLVR…VSIAMVEGPG (94 aa)).

Belongs to the acetyltransferase family.

It functions in the pathway mycotoxin biosynthesis. Its function is as follows. Putative acetyltransferase; part of the gene cluster that mediates the biosynthesis of butenolide, a mycotoxin that shows antibiotic activity but does not seem to play a major role in the spread of head blight in wheat. Butenolide is derived from glutamic acid via a 4-acetamido-2-butenoic acid intermediate. The predicted function of the NADH:flavin oxidoreductase FG08077, the cytochrome P450 monooxygenase FG08079, the decarboxylase FG08083, and the putative acetyltransferase FG08082 are consistent with this pathway, however, the respective activities of the butelonide biosynthesis cluster enzymes have still to be experimentally determined. The polypeptide is Putative acetyltransferase FG08082 (Gibberella zeae (strain ATCC MYA-4620 / CBS 123657 / FGSC 9075 / NRRL 31084 / PH-1) (Wheat head blight fungus)).